The sequence spans 144 residues: INO80 complex subunit 5 (144 aa).

The interval 1-58 (MAAQKKQGERVLPARSTRKRRQLPDMLYYDERTDSYVTPQERSLSEANAQTRPAPNTI) is disordered. Positions 35-58 (SYVTPQERSLSEANAQTRPAPNTI) are enriched in polar residues.

As to quaternary structure, component of the INO80 chromatin remodeling complex.

Its subcellular location is the nucleus. Component of the INO80 complex which remodels chromatin by shifting nucleosomes and is involved in DNA repair. This Schizosaccharomyces pombe (strain 972 / ATCC 24843) (Fission yeast) protein is INO80 complex subunit 5 (iec5).